A 403-amino-acid chain; its full sequence is TBC1 domain family member 20 (403 aa).

Residues 1 to 25 (MALRSAQGDGPTSGHWDGGAEKADF) form a disordered region. Residues 60-246 (LLTDEIRRKV…RLYDFFLACH (187 aa)) form the Rab-GAP TBC domain. Transmembrane regions (helical) follow at residues 238–258 (LYDF…AVIV) and 367–387 (FVKL…LAVV).

As to quaternary structure, (Microbial infection) Directly interacts with the N-terminal amphipathic helix of hepatitis C virus (HCV) NS5A.

The protein localises to the membrane. GTPase-activating protein (GAP) specific for Rab1 and Rab2 small GTPase families for which it can accelerate the intrinsic GTP hydrolysis rate by more than five orders of magnitude. Also shows GAP activity for RAB18 GTPase. Promotes RAB18 dissociation from the endoplasmic reticulum (ER) membrane into the cytosol, probably through stimulating RAB18 GTP-hydrolysis. Involved in maintaining endoplasmic reticulum structure. The chain is TBC1 domain family member 20 from Homo sapiens (Human).